The sequence spans 45 residues: Amphipathic peptide Hj0164 (45 aa).

A signal peptide spans 1 to 23; sequence MKSQAFFLLFLVVLLLATTQSEA. Phe-33 is subject to Phenylalanine amide. The propeptide occupies 37–45; that stretch reads SLRDVDTMK.

This sequence belongs to the non-disulfide-bridged peptide (NDBP) superfamily. Short antimicrobial peptide (group 4) family. As to expression, expressed by the venom gland.

The protein resides in the secreted. Its subcellular location is the target cell membrane. In terms of biological role, amphipathic peptide that shows antibacterial activities. The sequence is that of Amphipathic peptide Hj0164 from Hottentotta judaicus (Black scorpion).